Reading from the N-terminus, the 134-residue chain is Phosphoribosyl-AMP cyclohydrolase (134 aa).

Residue D80 coordinates Mg(2+). C81 is a Zn(2+) binding site. Mg(2+) contacts are provided by D82 and D84. The Zn(2+) site is built by C98 and C105.

This sequence belongs to the PRA-CH family. As to quaternary structure, homodimer. Mg(2+) serves as cofactor. The cofactor is Zn(2+).

It is found in the cytoplasm. It carries out the reaction 1-(5-phospho-beta-D-ribosyl)-5'-AMP + H2O = 1-(5-phospho-beta-D-ribosyl)-5-[(5-phospho-beta-D-ribosylamino)methylideneamino]imidazole-4-carboxamide. It participates in amino-acid biosynthesis; L-histidine biosynthesis; L-histidine from 5-phospho-alpha-D-ribose 1-diphosphate: step 3/9. Its function is as follows. Catalyzes the hydrolysis of the adenine ring of phosphoribosyl-AMP. The polypeptide is Phosphoribosyl-AMP cyclohydrolase (Bordetella pertussis (strain Tohama I / ATCC BAA-589 / NCTC 13251)).